The primary structure comprises 522 residues: Response regulator mcs4 (522 aa).

The tract at residues 148–274 (DSLESPVSAP…RSISHSSLYT (127 aa)) is disordered. The span at 174-194 (NLRNASRTRSHQTLPSSNVNK) shows a compositional bias: polar residues. The span at 244–255 (RSDESTAEKLAK) shows a compositional bias: basic and acidic residues. Residues 260–274 (TPTNSRSISHSSLYT) are compositionally biased toward polar residues. The region spanning 363–505 (NVLIVEDNII…WLEKKITEWG (143 aa)) is the Response regulatory domain. Aspartate 412 is modified (4-aspartylphosphate).

It localises to the cytoplasm. Functionally, response regulator that coordinately controls the stress activated wak1-wis1-sty1 MAP kinase pathway and fission yeast cell cycle. The chain is Response regulator mcs4 (mcs4) from Schizosaccharomyces pombe (strain 972 / ATCC 24843) (Fission yeast).